A 378-amino-acid polypeptide reads, in one-letter code: MSCAKKLVTLNPCTSVKLVPHRPIRATKMQCWMHPRRATCRVQRLRDAYHDERNESSLLHMTVYSDIFLDERARPYYRQLLRKRTDAAAARRAFLNAGQVHDCLLLEPAPSEHFKSIEEAGETNMSTLRTILATLTSFLGRVASTEYFLIVDRLFIDLVYSEFRAVVLPQHAYVLQQACADTDSSDEEPCERGVEPPWNQIVVAAHVAAAHRHEGARYNEWQRQSQYIYQTFLVYATLLTTILKQSNPFIISENSSASVVLRTLGKCPDNPERVNCCKLSYGGAPPGHLMCPPRAIVKKIYRYVNWASNPHKDQRYSALIARPSDAATGAGSGDLRENVDGNLHADDITPLILLDWDNFVSALMDYFGAPPGARPAGI.

This is an uncharacterized protein from Orgyia pseudotsugata multicapsid polyhedrosis virus (OpMNPV).